The primary structure comprises 852 residues: DNA mismatch repair protein MutS (852 aa).

Residue 602-609 (GPNMSGKS) participates in ATP binding.

Belongs to the DNA mismatch repair MutS family.

Its function is as follows. This protein is involved in the repair of mismatches in DNA. It is possible that it carries out the mismatch recognition step. This protein has a weak ATPase activity. This is DNA mismatch repair protein MutS from Streptococcus thermophilus (strain CNRZ 1066).